The following is a 394-amino-acid chain: Ceramide glucosyltransferase-A (394 aa).

Residues 1–10 are Lumenal-facing; that stretch reads MAVLDLALQG. Residues 11-32 traverse the membrane as a helical segment; the sequence is LAIFGCVLFFVLWFMHFLSIVY. Residues 33 to 195 are Cytoplasmic-facing; that stretch reads TRLHLNKKIS…QVYFGTSHPR (163 aa). Residue Asp-92 is a short sequence motif, D1. Position 144 (Asp-144) is a short sequence motif, D2. Residues 196 to 215 form a helical membrane-spanning segment; sequence SYISANVTGFKCVTGMSCLM. Topologically, residues 216-287 are lumenal; sequence RKEVLDQAGG…KLRINMLPAT (72 aa). Asp-236 is a short sequence motif (D3). Asp-236 (proton acceptor) is an active-site residue. Positions 272-276 match the (Q/R)XXRW motif; that stretch reads RMIRW. A helical transmembrane segment spans residues 288–304; sequence IICEPISECFVASLIIG. Residues 305–309 lie on the Cytoplasmic side of the membrane; it reads WAAHH. The helical transmembrane segment at 310 to 328 threads the bilayer; that stretch reads IFRWDIMVFFMCHCLAWFI. Over 329-348 the chain is Lumenal; sequence FDYIQLRGVQGGPLNFSKLD. A helical transmembrane segment spans residues 349 to 369; the sequence is YAVAWFIRESMTIYIFLSALW. Residues 370 to 394 lie on the Cytoplasmic side of the membrane; the sequence is DPTISWRTGRFRLRCGGTAEEILDV.

This sequence belongs to the glycosyltransferase 2 family. As to expression, at the late gastrula stage, weakly expressed ubiquitously. As neurulation proceeds (stages 15-16), expression moves towards the dorsal structures: involuted paraxial mesoderm and neural folds. In the tailbud embryo (stage 28), expression is restricted to the notochord. At later stages (stage 35), expression remains in the notochord and also appears weakly in the cephalic region.

The protein resides in the golgi apparatus membrane. The catalysed reaction is an N-acylsphing-4-enine + UDP-alpha-D-glucose = a beta-D-glucosyl-(1&lt;-&gt;1')-N-acylsphing-4-enine + UDP + H(+). It carries out the reaction UDP-alpha-D-xylose + an N-acylsphing-4-enine = a beta-D-xylosyl-(1&lt;-&gt;1')-N-acylsphing-4-enine + UDP + H(+). It catalyses the reaction N-(9Z-octadecenoyl)-sphing-4-enine + UDP-alpha-D-xylose = beta-D-xylosyl-(1&lt;-&gt;1')-N-(9Z-octadecenoyl)-sphing-4-enine + UDP + H(+). It participates in lipid metabolism; sphingolipid metabolism. Participates in the initial step of the glucosylceramide-based glycosphingolipid/GSL synthetic pathway at the cytosolic surface of the Golgi. Catalyzes the transfer of glucose from UDP-glucose to ceramide to produce glucosylceramide/GlcCer (such as beta-D-glucosyl-(1&lt;-&gt;1')-N-acylsphing-4-enine). Glucosylceramide is the core component of glycosphingolipids/GSLs, amphipathic molecules consisting of a ceramide lipid moiety embedded in the outer leaflet of the membrane, linked to one of hundreds of different externally oriented oligosaccharide structures. Glycosphingolipids are essential components of membrane microdomains that mediate membrane trafficking and signal transduction. They are implicated in many fundamental cellular processes, including growth, differentiation, migration, morphogenesis, cell-to-cell and cell-to-matrix interactions. Glycosphingolipids are required for convergence extension movements during early development. Catalyzes the synthesis of xylosylceramide/XylCer (such as beta-D-xylosyl-(1&lt;-&gt;1')-N-acylsphing-4-enine) using UDP-Xyl as xylose donor. The protein is Ceramide glucosyltransferase-A (ugcg-a) of Xenopus laevis (African clawed frog).